The chain runs to 135 residues: Ribonuclease VapC5 (135 aa).

In terms of domain architecture, PINc spans 9 to 130; sequence VLDTSVFIAT…FAALDGAASV (122 aa). Mg(2+) is bound by residues Asp-11 and Asp-100.

The protein belongs to the PINc/VapC protein family. Forms a complex with VapB5. Mg(2+) is required as a cofactor.

The protein localises to the secreted. Functionally, probable toxic component of a type II toxin-antitoxin (TA) system. The cognate antitoxin is VapB5. Has limited RNase activity on substrates; activity is seen with a VapC5-VapB5 complex. The sequence is that of Ribonuclease VapC5 from Mycobacterium tuberculosis (strain ATCC 25618 / H37Rv).